The sequence spans 250 residues: DNA repair protein RecO (250 aa).

Belongs to the RecO family.

In terms of biological role, involved in DNA repair and RecF pathway recombination. In Staphylococcus aureus (strain bovine RF122 / ET3-1), this protein is DNA repair protein RecO.